A 187-amino-acid polypeptide reads, in one-letter code: High-affinity copper transporter ctrA2 (187 aa).

Helical transmembrane passes span 44–64 (YAGT…LVAF) and 137–157 (AAIF…VMTM).

The protein belongs to the copper transporter (Ctr) (TC 1.A.56) family. SLC31A subfamily.

It localises to the cell membrane. The catalysed reaction is Cu(2+)(in) = Cu(2+)(out). In terms of biological role, high-affinity copper transporter of plasma membrane that mediates copper uptake under low copper conditions. The mechanism driving the transmembrane transport of copper has still to be determined. Acts as a potential virulence factor. This chain is High-affinity copper transporter ctrA2, found in Aspergillus fumigatus (strain ATCC MYA-4609 / CBS 101355 / FGSC A1100 / Af293) (Neosartorya fumigata).